A 768-amino-acid chain; its full sequence is Degenerin mec-4 (768 aa).

Residues 1–109 (MSWMQNLKNY…GEAPNVYYRA (109 aa)) lie on the Cytoplasmic side of the membrane. The helical transmembrane segment at 110-130 (VWVMLFLGCMIMLYLNAQSVL) threads the bilayer. The Extracellular segment spans residues 131–718 (DKYNRNEKIV…VNLLADFGGQ (588 aa)). 2 disordered regions span residues 187–221 (AGGNKEHDGEKEVITEAPTTPAPTTKPSRRRGKRD) and 237–260 (GSQGSSEQEDKDDEKEEEMHETTT). Residues 189–200 (GNKEHDGEKEVI) are compositionally biased toward basic and acidic residues. Positions 203-212 (APTTPAPTTK) are enriched in low complexity. Positions 243-252 (EQEDKDDEKE) are enriched in acidic residues. N-linked (GlcNAc...) asparagine glycosylation is found at Asn-336, Asn-357, Asn-480, Asn-484, Asn-503, and Asn-671. Residues 719-739 (LGLWCGISFLTCCEFVFLFLE) traverse the membrane as a helical segment. Over 740 to 768 (TAYMSAEHNYSLYKKKKAEKAKKVASGSF) the chain is Cytoplasmic.

Belongs to the amiloride-sensitive sodium channel (TC 1.A.6) family. In terms of assembly, the channel is probably composed of at least the mec-2, mec-4, mec-6 and mec-10 subunits.

The protein localises to the membrane. Its function is as follows. Probable sodium channel subunit. May be needed for mechanosensory transduction (touch sensitivity). Negatively regulates the turning step of male mating behavior. The chain is Degenerin mec-4 (mec-4) from Caenorhabditis briggsae.